The following is a 965-amino-acid chain: MLTLLNRWRSQPGGASNAAAFIRVLESPKSAVTDKVLVLKAFNDWDVLVNTWFEVADALPAVEQLLDNNTFPEHSSAALLVSKVYFCLEQYERALEFALRGDFNVVPATRTGLGNDAEYVNKIIETAIDTYKTLSKQGSGIPQKLRDLIDRIVARNLDKREIWFVISLGFETTNLAMIDRAISAMPADLTIKNQTTLVETLNRVVNGAFDRSFRFQVIDTVIKTYLKCPSPDMSKICECYVLTDNAEAAADTITSLIAKSLSTRAYQIAFDLYETASQGFLDRVLKRFQQQDARDEKSMEKIHSILKGHETVKAYLDFFVRHNHTDSVLMEEIKENIRTASAHNALLISNGLMQYGTTCDDFLRNNLNWVSKATNWNKFNAVASLGLIHHGQESSAMKVLEPYLPKESVEGFGFKEGGAMLAYGLIHAKHGDATAMSTLAQWLKTAENEPVRHGACLGFGVAGLGSSSVSNYEKVREVLQRDEAVSGESAGIAMGLIMAGHLNQEVFNELKQYTVDTQHDKTQRGIRTGLACAAFGLQGDAEPYIKEAIGAKSNPMLRSTGICMLSMAYAGTGSPDVVRRLLEKVATDPNLDVKRYATIGIGFVLSKDPSTCLSYVAMLTEHFNGHVRYGAAMALGIACAGTGNMEAIALIEPMISDKEGFVRKGALLSLALIMCQQTDYTCPKVNGFRKQLLKKIGEKNEDSLVKFGAIIAQGLLDIGGQNAAVTMQNSDKQPDMGSMVGMMCFLHGWFWHSMHFFIALAAKPSCLVMMNENLKIPVLDYICHANSQKFAYPPRAESKKDKDVKKIETVVLSITGKKNASKKLIAEEKKRREAAASASSAAAAPSSSSTSGTAPAAEDEKMEVDQPGKSKKEKAPEKDTKPLHRLQNPARVIPAQRQLISISDARAYSPMKPLYKGGIIVADRVDKEREEKLVSEVVTQVNTPASSGNTENKPHSTFEININDF.

PC repeat units follow at residues 380–413, 418–452, 454–488, 489–523, 560–595, 630–664, 665–706, and 708–738; these read NAVA…EGFG, GAML…EPVR, GACL…VSGE, SAGI…DKTQ, TGIC…DVKR, GAAM…FVRK, GALL…SLVK, and GAII…DMGS. A compositionally biased stretch (low complexity) spans 836-856; the sequence is ASASSAAAAPSSSSTSGTAPA. Disordered stretches follow at residues 836–889 and 943–965; these read ASAS…LQNP and TPAS…INDF. Residues 863–882 are compositionally biased toward basic and acidic residues; it reads EVDQPGKSKKEKAPEKDTKP.

This sequence belongs to the proteasome subunit S1 family.

In terms of biological role, acts as a regulatory subunit of the 26 proteasome which is involved in the ATP-dependent degradation of ubiquitinated proteins. This is 26S proteasome non-ATPase regulatory subunit 1 (rpn-2) from Caenorhabditis elegans.